Consider the following 163-residue polypeptide: Adenosine 5'-monophosphoramidase HINT2 (163 aa).

The transit peptide at 1 to 17 (MAAAVVLAAGLCVARRA) directs the protein to the mitochondrion. In terms of domain architecture, HIT spans 55 to 163 (IFSRILDRSL…GGRQLQWPPG (109 aa)). Ser63 and Asp80 together coordinate AMP. Position 119 is an N6-acetyllysine (Lys119). Residue Asn136 participates in AMP binding. Lys139 carries the post-translational modification N6-acetyllysine. Residues 142–145 (AQSV) and 149–151 (HIH) each bind AMP. The Histidine triad motif motif lies at 147-151 (HLHIH). His149 serves as the catalytic Tele-AMP-histidine intermediate.

This sequence belongs to the HINT family.

It is found in the mitochondrion. It carries out the reaction adenosine 5'-phosphoramidate + H2O = AMP + NH4(+). Its function is as follows. Exhibits adenosine 5'-monophosphoramidase activity, hydrolyzing purine nucleotide phosphoramidates with a single phosphate group such as adenosine 5'monophosphoramidate (AMP-NH2) to yield AMP and NH2. Hydrolyzes adenosine 5'-O-p-nitrophenylphosphoramidate (AMP-pNA). May be involved in steroid biosynthesis. May play a role in apoptosis. This chain is Adenosine 5'-monophosphoramidase HINT2, found in Bos taurus (Bovine).